Reading from the N-terminus, the 379-residue chain is Putative acetyl-CoA C-acetyltransferase VraB (379 aa).

Cysteine 86 serves as the catalytic Acyl-thioester intermediate. Residue histidine 338 is the Proton acceptor of the active site.

This sequence belongs to the thiolase-like superfamily. Thiolase family.

In Staphylococcus aureus (strain MSSA476), this protein is Putative acetyl-CoA C-acetyltransferase VraB (vraB).